The primary structure comprises 434 residues: UDP-N-acetylmuramate--L-alanine ligase (434 aa).

Position 108–114 (108–114 (GSHGKTT)) interacts with ATP.

Belongs to the MurCDEF family.

Its subcellular location is the cytoplasm. The catalysed reaction is UDP-N-acetyl-alpha-D-muramate + L-alanine + ATP = UDP-N-acetyl-alpha-D-muramoyl-L-alanine + ADP + phosphate + H(+). It functions in the pathway cell wall biogenesis; peptidoglycan biosynthesis. Functionally, cell wall formation. This chain is UDP-N-acetylmuramate--L-alanine ligase, found in Geobacillus thermodenitrificans (strain NG80-2).